A 168-amino-acid chain; its full sequence is uncharacterized protein (168 aa).

Disordered stretches follow at residues 1–81 and 119–150; these read MSSA…GRSW and RDLSESASTGSENLSRKASNQSQSQGRLSTVA. A compositionally biased stretch (low complexity) spans 7-34; that stretch reads SRTSRSKATGASSSSISSSIRASPSSSS. Over residues 43–67 the composition is skewed to basic residues; the sequence is TRRRRRRTGRRSTKRSIISPRRRRM. The span at 123-146 shows a compositional bias: polar residues; it reads ESASTGSENLSRKASNQSQSQGRL.

This is an uncharacterized protein from Human adenovirus C serotype 2 (HAdV-2).